The primary structure comprises 155 residues: UPF0260 protein Smed_0627 (155 aa).

It belongs to the UPF0260 family.

The protein is UPF0260 protein Smed_0627 of Sinorhizobium medicae (strain WSM419) (Ensifer medicae).